The sequence spans 298 residues: ER-bound oxygenase mpaB (298 aa).

Residues 1-24 lie on the Lumenal side of the membrane; that stretch reads MDKGTSFFTTPSFSATTRAIFNTM. A helical transmembrane segment spans residues 25–45; it reads PQWFSFAVGLLIAYPLLINSL. The Cytoplasmic segment spans residues 46–298; that stretch reads RYRRLKQLQK…RLRKAMLYVE (253 aa).

This sequence belongs to the mpaB oxygenase family.

The protein resides in the endoplasmic reticulum membrane. It catalyses the reaction 4-farnesyl-3,5-dihydroxy-6-methylphthalide + AH2 + 2 O2 = (4E,8E)-10-(4,6-dihydroxy-7-methyl-3-oxo-1,3-dihydro-2-benzofuran-5-yl)-4,8-dimethyldeca-4,8-dienoate + acetone + A + H2O + H(+). The protein operates within secondary metabolite biosynthesis; terpenoid biosynthesis. Its function is as follows. ER-bound oxygenase; part of the gene cluster that mediates the biosynthesis of mycophenolic acid (MPA), the first isolated antibiotic natural product in the world obtained from a culture of Penicillium brevicompactum in 1893. MpaB catalyzes the oxidative cleavage the C19-C20 double bond in farnesyl-DHMP (FDHMP) to yield FDHMP-3C via a mycophenolic aldehyde intermediate. The first step of the pathway is the synthesis of 5-methylorsellinic acid (5MOA) by the cytosolic polyketide synthase mpaC. 5MOA is then converted to the phthalide compound 5,7-dihydroxy-4,6-dimethylphthalide (DHMP) by the endoplasmic reticulum-bound cytochrome P450 monooxygenase mpaDE. MpaDE first catalyzes hydroxylation of 5-MOA to 4,6-dihydroxy-2-(hydroxymethyl)-3-methylbenzoic acid (DHMB). MpaDE then acts as a lactone synthase that catalyzes the ring closure to convert DHMB into DHMP. The next step is the prenylation of DHMP by the Golgi apparatus-associated prenyltransferase mpaA to yield farnesyl-DHMP (FDHMP). The ER-bound oxygenase mpaB then mediates the oxidative cleavage the C19-C20 double bond in FDHMP to yield FDHMP-3C via a mycophenolic aldehyde intermediate. The O-methyltransferase mpaG catalyzes the methylation of FDHMP-3C to yield MFDHMP-3C. After the cytosolic methylation of FDHMP-3C, MFDHMP-3C enters into peroxisomes probably via free diffusion due to its low molecular weight. Upon a peroxisomal CoA ligation reaction, catalyzed by a beta-oxidation component enzyme acyl-CoA ligase ACL891, MFDHMP-3C-CoA would then be restricted to peroxisomes for the following beta-oxidation pathway steps. The peroxisomal beta-oxidation machinery than converts MFDHMP-3C-CoA into MPA_CoA, via a beta-oxidation chain-shortening process. Finally mpaH acts as a peroxisomal acyl-CoA hydrolase with high substrate specificity toward MPA-CoA to release the final product MPA. This Penicillium roqueforti (strain FM164) protein is ER-bound oxygenase mpaB.